The following is a 566-amino-acid chain: 3'-5' exoribonuclease parn-1 (566 aa).

D29, E31, D283, and D379 together coordinate a divalent metal cation.

Belongs to the CAF1 family. A divalent metal cation serves as cofactor. In terms of tissue distribution, expressed in germline cells.

It is found in the cytoplasm. Its function is as follows. Involved in transcriptome surveillance. Required for piwi-interacting RNAs (piRNAs) 3'-end trimming, which is important for both fertility and piRNA-directed gene silencing. Has 3' to 5' exonuclease activity in vitro. This chain is 3'-5' exoribonuclease parn-1, found in Caenorhabditis elegans.